The following is a 362-amino-acid chain: Prostaglandin F2-alpha receptor (362 aa).

Residues 1–31 (MSTNSSIQPVSPESELLSNTTCQLEEDLSIS) lie on the Extracellular side of the membrane. Asn4 and Asn19 each carry an N-linked (GlcNAc...) asparagine glycan. The helical transmembrane segment at 32 to 54 (FSIIFMTVGILSNSLAIAILMKA) threads the bilayer. At 55-69 (YQRFRQKYKSSFLLL) the chain is on the cytoplasmic side. The helical transmembrane segment at 70 to 90 (ASALVITDFFGHLINGTIAVF) threads the bilayer. Residues 91 to 109 (VYASDKDWIYFDKSNILCS) are Extracellular-facing. Cys108 and Cys186 are disulfide-bonded. Residues 110 to 131 (IFGICMVFSGLCPLFLGSLMAI) traverse the membrane as a helical segment. Topologically, residues 132–152 (ERCIGVTKPIFHSTKITTKHV) are cytoplasmic. A helical transmembrane segment spans residues 153–175 (KMMLSGVCFFAVFVALLPILGHR). The Extracellular segment spans residues 176 to 198 (DYKIQASRTWCFYKTDEIKDWED). A helical transmembrane segment spans residues 199 to 224 (RFYLLLFAFLGLLALGISFVCNAITG). The Cytoplasmic portion of the chain corresponds to 225–250 (ISLLKVKFRSQQHRQGRSHHFEMVIQ). A helical transmembrane segment spans residues 251 to 267 (LLGIMCVSCICWSPFLV). At 268–285 (TMASIGMNIQDFKDSCER) the chain is on the extracellular side. The chain crosses the membrane as a helical span at residues 286-307 (TLFTLRMATWNQILDPWVYILL). At 308-362 (RKAVLRNLYVCTRRCCGVHVISLHVWELSSIKDSLKVAAISDLPVTEKVTQQTST) the chain is on the cytoplasmic side.

It belongs to the G-protein coupled receptor 1 family.

Its subcellular location is the cell membrane. In terms of biological role, receptor for prostaglandin F2-alpha (PGF2-alpha). The activity of this receptor is mediated by G proteins which activate a phosphatidylinositol-calcium second messenger system. Initiates luteolysis in the corpus luteum. The sequence is that of Prostaglandin F2-alpha receptor (PTGFR) from Bos taurus (Bovine).